Consider the following 399-residue polypeptide: Argininosuccinate synthase (399 aa).

8-16 (AYSGGLDTS) is a binding site for ATP. Residues Tyr87 and Ser92 each coordinate L-citrulline. Residue Gly117 coordinates ATP. Positions 119, 123, and 124 each coordinate L-aspartate. Asn123 serves as a coordination point for L-citrulline. L-citrulline contacts are provided by Arg127, Ser176, Ser185, Glu261, and Tyr273.

This sequence belongs to the argininosuccinate synthase family. Type 1 subfamily. Homotetramer.

It localises to the cytoplasm. The enzyme catalyses L-citrulline + L-aspartate + ATP = 2-(N(omega)-L-arginino)succinate + AMP + diphosphate + H(+). The protein operates within amino-acid biosynthesis; L-arginine biosynthesis; L-arginine from L-ornithine and carbamoyl phosphate: step 2/3. This is Argininosuccinate synthase from Clostridioides difficile (strain 630) (Peptoclostridium difficile).